A 197-amino-acid polypeptide reads, in one-letter code: CASP-like protein 1B1 (197 aa).

Ala-2 carries the N-acetylalanine modification. At 2–17 the chain is on the cytoplasmic side; it reads AVSKLTLAATSGKSCK. The chain crosses the membrane as a helical span at residues 18 to 38; it reads ILLGLRLLAFSATLSAAIVMG. Over 39 to 69 the chain is Extracellular; the sequence is LNKETKTFIVGKVGNTPIQATFTAKFDHTPA. A helical transmembrane segment spans residues 70–90; sequence FVFFVVANAMVSFHNLLMIAL. At 91-106 the chain is on the cytoplasmic side; that stretch reads QIFGGKMEFTGFRLLS. A helical membrane pass occupies residues 107–127; the sequence is VAILDMLNVTLISAAANAAAF. At 128–156 the chain is on the extracellular side; the sequence is MAEVGKNGNKHARWDKICDRFATYCDHGA. Residues 157–177 form a helical membrane-spanning segment; sequence GALIAAFAGVILMLIISAASI. The Cytoplasmic portion of the chain corresponds to 178–197; sequence SRLVQPNKCCSTTASPSVVP.

This sequence belongs to the Casparian strip membrane proteins (CASP) family. As to quaternary structure, homodimer and heterodimers.

The protein resides in the cell membrane. This is CASP-like protein 1B1 from Arabidopsis thaliana (Mouse-ear cress).